The sequence spans 517 residues: 2,3-bisphosphoglycerate-independent phosphoglycerate mutase (517 aa).

Mn(2+)-binding residues include D12 and S62. The Phosphoserine intermediate role is filled by S62. Substrate-binding positions include H123, R153–D154, R185, R191, R261–R264, and K336. Mn(2+) is bound by residues D403, H407, D444, H445, and H463.

The protein belongs to the BPG-independent phosphoglycerate mutase family. In terms of assembly, monomer. Requires Mn(2+) as cofactor.

The catalysed reaction is (2R)-2-phosphoglycerate = (2R)-3-phosphoglycerate. The protein operates within carbohydrate degradation; glycolysis; pyruvate from D-glyceraldehyde 3-phosphate: step 3/5. Catalyzes the interconversion of 2-phosphoglycerate and 3-phosphoglycerate. This is 2,3-bisphosphoglycerate-independent phosphoglycerate mutase from Methylobacillus flagellatus (strain ATCC 51484 / DSM 6875 / VKM B-1610 / KT).